A 698-amino-acid polypeptide reads, in one-letter code: Serotransferrin (698 aa).

The signal sequence occupies residues 1–19 (MRLAVGALLVCAVLGLCLA). Transferrin-like domains follow at residues 25 to 347 (VRWC…NLRE) and 361 to 683 (VKWC…NLRK). Cystine bridges form between cysteine 28/cysteine 67 and cysteine 38/cysteine 58. The residue at position 42 (arginine 42) is a Dimethylated arginine. O-linked (GalNAc...) serine glycosylation is present at serine 51. Aspartate 82 and tyrosine 114 together coordinate Fe(3+). Disulfide bonds link cysteine 137/cysteine 213, cysteine 156/cysteine 350, cysteine 177/cysteine 193, cysteine 180/cysteine 196, cysteine 190/cysteine 198, cysteine 246/cysteine 260, cysteine 358/cysteine 615, cysteine 364/cysteine 396, cysteine 374/cysteine 387, cysteine 421/cysteine 693, cysteine 437/cysteine 656, cysteine 469/cysteine 542, cysteine 493/cysteine 684, cysteine 503/cysteine 517, cysteine 514/cysteine 525, cysteine 582/cysteine 596, and cysteine 634/cysteine 639. Hydrogencarbonate is bound by residues threonine 139, arginine 143, alanine 145, and glycine 146. Residue tyrosine 207 coordinates Fe(3+). Fe(3+) is bound at residue histidine 268. At serine 389 the chain carries Phosphoserine. Residues aspartate 411 and tyrosine 445 each contribute to the Fe(3+) site. Hydrogencarbonate-binding residues include threonine 471, arginine 475, alanine 477, and glycine 478. Tyrosine 536 contacts Fe(3+). Histidine 604 serves as a coordination point for Fe(3+). An N-linked (GlcNAc...) asparagine glycan is attached at asparagine 630. The residue at position 685 (serine 685) is a Phosphoserine.

It belongs to the transferrin family. As to quaternary structure, monomer. Part of a complex composed of SLC40A1/ferroportin, TF/transferrin and HEPH/hephaestin that transfers iron from cells to transferrin. As to expression, expressed by the liver and secreted in plasma.

It is found in the secreted. Functionally, transferrins are iron binding transport proteins which can bind two Fe(3+) ions in association with the binding of an anion, usually bicarbonate. It is responsible for the transport of iron from sites of absorption and heme degradation to those of storage and utilization. Serum transferrin may also have a further role in stimulating cell proliferation. In Pan troglodytes (Chimpanzee), this protein is Serotransferrin (TF).